The chain runs to 371 residues: Glutamate 5-kinase (371 aa).

K10 contacts ATP. Substrate contacts are provided by S50, D137, and N149. ATP is bound by residues 169-170 (SD) and 208-214 (TGGMFTK). Residues 274–352 (EGRIYIDDGA…EEIRNILGED (79 aa)) enclose the PUA domain.

Belongs to the glutamate 5-kinase family.

The protein resides in the cytoplasm. The enzyme catalyses L-glutamate + ATP = L-glutamyl 5-phosphate + ADP. Its pathway is amino-acid biosynthesis; L-proline biosynthesis; L-glutamate 5-semialdehyde from L-glutamate: step 1/2. Catalyzes the transfer of a phosphate group to glutamate to form L-glutamate 5-phosphate. In Dictyoglomus turgidum (strain DSM 6724 / Z-1310), this protein is Glutamate 5-kinase.